Consider the following 399-residue polypeptide: Argonaute-binding protein 1 (399 aa).

In terms of assembly, component of the argonaute siRNA chaperone (ARC) complex composed of ago1, arb1 and arb2. Interacts with ago1.

Its subcellular location is the nucleus. The protein resides in the cytoplasm. Functionally, component of the argonaute siRNA chaperone (ARC) complex which is required for histone H3K9 methylation, heterochromatin assembly and siRNA generation. The ARC complex contains mostly double-stranded siRNA. Inhibits the release of the siRNA passenger strand from ago1 together with arb2. Inhibits the slicer activity of ago1. Required for swi6 localization to the centromeric repeats. This chain is Argonaute-binding protein 1 (arb1), found in Schizosaccharomyces pombe (strain 972 / ATCC 24843) (Fission yeast).